A 422-amino-acid polypeptide reads, in one-letter code: Histidine--tRNA ligase (422 aa).

This sequence belongs to the class-II aminoacyl-tRNA synthetase family. Homodimer.

It localises to the cytoplasm. The enzyme catalyses tRNA(His) + L-histidine + ATP = L-histidyl-tRNA(His) + AMP + diphosphate + H(+). This is Histidine--tRNA ligase from Vibrio parahaemolyticus serotype O3:K6 (strain RIMD 2210633).